The sequence spans 334 residues: Thiamine-binding periplasmic protein (334 aa).

A signal peptide spans 1-23; it reads MRLLSLLTFSLFAVIGLAPAAQA. Residues 64–65, 166–167, W202, and 220–223 contribute to the thiamine site; these read DG, AT, and YTTS.

This sequence belongs to the bacterial solute-binding protein 1 family. In terms of assembly, the complex is composed of two ATP-binding proteins (ThiQ), two transmembrane proteins (ThiP) and a solute-binding protein (ThiB).

The protein localises to the periplasm. In terms of biological role, part of the ABC transporter complex ThiBPQ involved in thiamine import. This chain is Thiamine-binding periplasmic protein (thiB), found in Brucella abortus biovar 1 (strain 9-941).